The sequence spans 138 residues: SPbeta prophage-derived uncharacterized protein YopJ (138 aa).

This chain is SPbeta prophage-derived uncharacterized protein YopJ (yopJ), found in Bacillus subtilis (strain 168).